A 452-amino-acid polypeptide reads, in one-letter code: Phosphoglucosamine mutase (452 aa).

The active-site Phosphoserine intermediate is the Ser101. Residues Ser101, Asp241, Asp243, and Asp245 each contribute to the Mg(2+) site. Position 101 is a phosphoserine (Ser101).

Belongs to the phosphohexose mutase family. Mg(2+) serves as cofactor. Activated by phosphorylation.

The catalysed reaction is alpha-D-glucosamine 1-phosphate = D-glucosamine 6-phosphate. Catalyzes the conversion of glucosamine-6-phosphate to glucosamine-1-phosphate. This Lactococcus lactis subsp. cremoris (strain MG1363) protein is Phosphoglucosamine mutase.